The following is a 157-amino-acid chain: Protein MG115 (157 aa).

The protein belongs to the CinA family.

This Mycoplasma genitalium (strain ATCC 33530 / DSM 19775 / NCTC 10195 / G37) (Mycoplasmoides genitalium) protein is Protein MG115.